We begin with the raw amino-acid sequence, 395 residues long: MEVAYKEDLLTSFAEAFSIDRLTDVRVFFAPGRVNLIGEHTDYNGGYVFPGALTNGTYMVIKLRDDGEYHLRSANFDTSVVFRNSDLRFDPKDDWGNYPKGIIAELAKLGVDLPGATIYFYGNIPNGAGLSSSASIGMVTAYGLTQCSGIDIDRVTLAKLCQRMENDFIGVSTGLMDQFAVGMGKKDHALFLNTSSLEYDQVPLILKGYKLVITNSNKRRGLADSKYNERRRECEIGLEQLRKKQTNLSHLGEVTEEMFAELGPVIEDELIYRRVRHVVTEDARVLAAVSALKAGELQTFGELMKASHLSLREDYDVTGVELDTLFDLQASAPGCIGTRMTGAGFGGCTVSIVHEEEITAFQTVVSKGYEKKIGYKPTFYVTELGDGVNEWKGGA.

Substrate is bound at residue 39–42 (EHTD). Residues Ser73 and 127-133 (GAGLSSS) contribute to the ATP site. Mg(2+) contacts are provided by Ser133 and Glu165. Catalysis depends on Asp177, which acts as the Proton acceptor. Residue Tyr227 coordinates substrate.

This sequence belongs to the GHMP kinase family. GalK subfamily.

It is found in the cytoplasm. The enzyme catalyses alpha-D-galactose + ATP = alpha-D-galactose 1-phosphate + ADP + H(+). Its pathway is carbohydrate metabolism; galactose metabolism. Functionally, catalyzes the transfer of the gamma-phosphate of ATP to D-galactose to form alpha-D-galactose-1-phosphate (Gal-1-P). This chain is Galactokinase, found in Halalkalibacterium halodurans (strain ATCC BAA-125 / DSM 18197 / FERM 7344 / JCM 9153 / C-125) (Bacillus halodurans).